Consider the following 354-residue polypeptide: Magnesium-chelatase subunit ChlI (354 aa).

47–54 (GDRGTGKS) lines the ATP pocket. A disulfide bridge links Cys282 with Cys324.

It belongs to the Mg-chelatase subunits D/I family. In terms of assembly, the magnesium chelatase complex is a heterotrimer consisting of subunits CHLI, CHLD and CHLH.

Its subcellular location is the plastid. It is found in the chloroplast. The enzyme catalyses protoporphyrin IX + Mg(2+) + ATP + H2O = Mg-protoporphyrin IX + ADP + phosphate + 3 H(+). It functions in the pathway porphyrin-containing compound metabolism; chlorophyll biosynthesis. Its activity is regulated as follows. Redox regulation; active in reducing conditions, inactive in oxidizing conditions. Thioredoxins f and m mediate the reversible reductive activation of oxidized CHLI. Functionally, involved in chlorophyll biosynthesis. Catalyzes the insertion of magnesium ion into protoporphyrin IX to yield Mg-protoporphyrin IX. The magnesium-chelatase is a complex of three subunits, CHLI, CHLD and CHLH. The reaction takes place in two steps, with an ATP-dependent activation followed by an ATP-dependent chelation step. The protein is Magnesium-chelatase subunit ChlI (chlI) of Chlorella vulgaris (Green alga).